The following is a 168-amino-acid chain: uncharacterized protein (168 aa).

CBS domains are found at residues 20–77 and 117–168; these read IMKK…NEDL and MTRK…EALI.

This is an uncharacterized protein from Methanocaldococcus jannaschii (strain ATCC 43067 / DSM 2661 / JAL-1 / JCM 10045 / NBRC 100440) (Methanococcus jannaschii).